A 285-amino-acid chain; its full sequence is Purine biosynthesis transcriptional repressor PurR (285 aa).

Positions 1 to 73 are DNA binding domain; it reads MKFRRSGRLV…GAAGGVKYIP (73 aa). The interval 74–285 is effector binding domain; sequence KMKQAEAEEF…NLLKNGETES (212 aa). Y102 serves as a coordination point for guanosine 3',5'-bis(diphosphate). Residues A138, T139, K140, and R160 each coordinate 5-phospho-alpha-D-ribose 1-diphosphate. Residues G178 and S179 each contribute to the guanosine 3',5'-bis(diphosphate) site. The 5-phospho-alpha-D-ribose 1-diphosphate site is built by D203, D204, F205, K207, and A208. Guanosine 3',5'-bis(diphosphate) is bound at residue K207. Guanosine 3',5'-bis(diphosphate)-binding residues include G209, G210, and T211. T211 provides a ligand contact to 5-phospho-alpha-D-ribose 1-diphosphate.

Belongs to the purine/pyrimidine phosphoribosyltransferase family. PurR subfamily. Homodimer.

The binding of PurR to DNA, and therefore the repressor activity, is influenced by interaction with the effector molecules 5-phosphoribosyl 1-pyrophosphate (PRPP) and (p)ppGpp. PRPP binds to PurR and reduces affinity of PurR for DNA, which inhibits the repressor activity and induces transcription of the target genes. On the contrary, (p)ppGpp enhances binding of PurR to DNA and repression of the transcription. PRPP and (p)ppGpp compete for PurR binding and allosteric control of transcription. ppGpp maintains PurR-DNA interaction and prevents PRPP from de-repressing PurR regulation during conditions that lead to (p)ppGpp induction, such as upon amino acid starvation. In terms of biological role, DNA-binding transcriptional repressor that controls the expression of a number of genes involved in the synthesis, metabolism and transport of purines. In response to a signal of excess adenine, represses the transcription of the pur operon, which encodes enzymes of the purine biosynthetic pathway. It also represses the expression of the purA and purR genes. In addition, controls the expression of several other genes or operons, which encode enzymes or transporters playing a role in purine nucleotide metabolism. Acts by binding directly to specific DNA sequences, named PurBoxes, in the upstream control regions of affected genes. Two PurBoxes are required for high-affinity PurR binding. Also responds to amino acid starvation via (p)ppGpp, which strongly increases PurR activity and repression of purine nucleotide biosynthesis genes. The protein is Purine biosynthesis transcriptional repressor PurR of Bacillus subtilis (strain 168).